The following is a 141-amino-acid chain: MAIERTLSIVKPDAVAKNVIGKIYDRFESNGLKIVAAKMKHLSRREAEGFYAVHKERPFFNDLVEFMISGPVMVQVLEGENAVLKNRELMGATDPKKADAGTIRADFAESIDANAVHGSDSLENAAIEIAYFFSATEVCPR.

Positions 11, 59, 87, 93, 104, and 114 each coordinate ATP. H117 functions as the Pros-phosphohistidine intermediate in the catalytic mechanism.

It belongs to the NDK family. As to quaternary structure, homotetramer. Mg(2+) serves as cofactor.

The protein localises to the cytoplasm. It catalyses the reaction a 2'-deoxyribonucleoside 5'-diphosphate + ATP = a 2'-deoxyribonucleoside 5'-triphosphate + ADP. The enzyme catalyses a ribonucleoside 5'-diphosphate + ATP = a ribonucleoside 5'-triphosphate + ADP. Its function is as follows. Major role in the synthesis of nucleoside triphosphates other than ATP. The ATP gamma phosphate is transferred to the NDP beta phosphate via a ping-pong mechanism, using a phosphorylated active-site intermediate. In Laribacter hongkongensis (strain HLHK9), this protein is Nucleoside diphosphate kinase.